Here is a 168-residue protein sequence, read N- to C-terminus: Peptidoglycan-associated lipoprotein (168 aa).

Positions 1–21 are cleaved as a signal peptide; that stretch reads MEMLKFGKFAALALAMAVAVG. Cys22 carries N-palmitoyl cysteine lipidation. A lipid anchor (S-diacylglycerol cysteine) is attached at Cys22. The OmpA-like domain maps to 56-168; that stretch reads SDEAALRAIT…AQNRRVELKK (113 aa). Positions 147 to 168 are disordered; that stretch reads RPVATGHDEQSWAQNRRVELKK.

This sequence belongs to the Pal lipoprotein family. In terms of assembly, the Tol-Pal system is composed of five core proteins: the inner membrane proteins TolA, TolQ and TolR, the periplasmic protein TolB and the outer membrane protein Pal. They form a network linking the inner and outer membranes and the peptidoglycan layer.

Its subcellular location is the cell outer membrane. Functionally, part of the Tol-Pal system, which plays a role in outer membrane invagination during cell division and is important for maintaining outer membrane integrity. The chain is Peptidoglycan-associated lipoprotein from Pseudomonas aeruginosa (strain ATCC 15692 / DSM 22644 / CIP 104116 / JCM 14847 / LMG 12228 / 1C / PRS 101 / PAO1).